A 622-amino-acid polypeptide reads, in one-letter code: Protein FAM234B (622 aa).

The tract at residues 1 to 68 (MATVLSRALK…EPDSDAEVAE (68 aa)) is disordered. Ser16 is subject to Phosphoserine. Thr26 carries the post-translational modification Phosphothreonine. A phosphoserine mark is found at Ser30, Ser33, and Ser62. A helical membrane pass occupies residues 104 to 124 (TSVFLLTLGISMILVLLCAFL).

It belongs to the FAM234 family.

The protein resides in the membrane. It is found in the golgi outpost. Its subcellular location is the cytoplasm. It localises to the cytoskeleton. The protein localises to the microtubule organizing center. The polypeptide is Protein FAM234B (Homo sapiens (Human)).